Here is a 61-residue protein sequence, read N- to C-terminus: Large ribosomal subunit protein uL30 (61 aa).

Belongs to the universal ribosomal protein uL30 family. Part of the 50S ribosomal subunit.

This chain is Large ribosomal subunit protein uL30, found in Shewanella halifaxensis (strain HAW-EB4).